We begin with the raw amino-acid sequence, 919 residues long: Isoleucine--tRNA ligase (919 aa).

Positions 57-67 (PYANGNIHIGH) match the 'HIGH' region motif. Glutamate 569 contributes to the L-isoleucyl-5'-AMP binding site. Positions 610–614 (KMSKS) match the 'KMSKS' region motif. Lysine 613 contributes to the ATP binding site. The Zn(2+) site is built by cysteine 896, cysteine 899, cysteine 911, and cysteine 914.

The protein belongs to the class-I aminoacyl-tRNA synthetase family. IleS type 1 subfamily. As to quaternary structure, monomer. Zn(2+) is required as a cofactor.

The protein resides in the cytoplasm. It catalyses the reaction tRNA(Ile) + L-isoleucine + ATP = L-isoleucyl-tRNA(Ile) + AMP + diphosphate. In terms of biological role, catalyzes the attachment of isoleucine to tRNA(Ile). As IleRS can inadvertently accommodate and process structurally similar amino acids such as valine, to avoid such errors it has two additional distinct tRNA(Ile)-dependent editing activities. One activity is designated as 'pretransfer' editing and involves the hydrolysis of activated Val-AMP. The other activity is designated 'posttransfer' editing and involves deacylation of mischarged Val-tRNA(Ile). This chain is Isoleucine--tRNA ligase, found in Aliarcobacter butzleri (strain RM4018) (Arcobacter butzleri).